The sequence spans 162 residues: uncharacterized protein (162 aa).

The protein belongs to the LOR family.

This is an uncharacterized protein from Bacillus subtilis (strain 168).